Reading from the N-terminus, the 24-residue chain is Hyaluronidase (24 aa).

Expressed by the venom gland.

Its subcellular location is the secreted. The catalysed reaction is Random hydrolysis of (1-&gt;4)-linkages between N-acetyl-beta-D-glucosamine and D-glucuronate residues in hyaluronate.. Functionally, possesses high activity against hyaluronan in vitro. The chain is Hyaluronidase from Tityus stigmurus (Brazilian scorpion).